The following is a 742-amino-acid chain: Synaptic vesicle glycoprotein 2A (742 aa).

The interval 1–57 (MEEGFRDRAAFIRGAKDIAKEVKKHAAKKVVKGLDRVQDEYSRRSYSRFEEEEDDDD) is interaction with SYT1. The Cytoplasmic portion of the chain corresponds to 1 to 169 (MEEGFRDRAA…GHGRFQWTLY (169 aa)). The span at 40–49 (EYSRRSYSRF) shows a compositional bias: basic and acidic residues. Positions 40–145 (EYSRRSYSRF…RGEAQRRKDR (106 aa)) are disordered. 2 positions are modified to phosphoserine: S80 and S81. T84 carries the phosphothreonine modification. The span at 122–137 (VRGGLSDGEGPPGGRG) shows a compositional bias: gly residues. S127 is subject to Phosphoserine. Residues 170–190 (FVLGLALMADGVEVFVVGFVL) form a helical membrane-spanning segment. The Extracellular segment spans residues 191–205 (PSAEKDMCLSDSNKG). The chain crosses the membrane as a helical span at residues 206–226 (MLGLIVYLGMMVGAFLWGGLA). Residues 227 to 233 (DRLGRRQ) lie on the Cytoplasmic side of the membrane. Residues 234-254 (CLLISLSVNSVFAFFSSFVQG) form a helical membrane-spanning segment. Over 255 to 262 (YGTFLFCR) the chain is Extracellular. Residues 263-283 (LLSGVGIGGSIPIVFSYFSEF) traverse the membrane as a helical segment. Residues 284–294 (LAQEKRGEHLS) are Cytoplasmic-facing. The helical transmembrane segment at 295–315 (WLCMFWMIGGVYAAAMAWAII) threads the bilayer. Residues 316 to 334 (PHYGWSFQMGSAYQFHSWR) lie on the Extracellular side of the membrane. A helical membrane pass occupies residues 335–355 (VFVLVCAFPSVFAIGALTTQP). Topologically, residues 356-447 (ESPRFFLENG…CFSPEYRRIT (92 aa)) are cytoplasmic. S393 carries the phosphoserine modification. The helical transmembrane segment at 448–468 (LMMMGVWFTMSFSYYGLTVWF) threads the bilayer. Topologically, residues 469–598 (PDMIRHLQAV…GTGEGAYMVY (130 aa)) are extracellular. The residue at position 480 (Y480) is a Phosphotyrosine. 2 N-linked (GlcNAc...) asparagine glycosylation sites follow: N498 and N548. An N-linked (GlcNAc...) asparagine; alternate glycan is attached at N573. N573 carries an N-linked (HexNAc...) asparagine; alternate glycan. The helical transmembrane segment at 599–619 (FVSFLGTLAVLPGNIVSALLM) threads the bilayer. Residues 620-626 (DKIGRLR) are Cytoplasmic-facing. The helical transmembrane segment at 627-647 (MLAGSSVLSCVSCFFLSFGNS) threads the bilayer. Topologically, residues 648 to 651 (ESAM) are extracellular. A helical transmembrane segment spans residues 652 to 672 (IALLCLFGGVSIASWNALDVL). The Cytoplasmic segment spans residues 673-685 (TVELYPSDKRTTA). A helical membrane pass occupies residues 686–708 (FGFLNALCKLAAVLGISIFTSFV). Topologically, residues 709–712 (GITK) are extracellular. Residues 713-731 (AAPILFASAALALGSSLAL) form a helical membrane-spanning segment. Topologically, residues 732 to 742 (KLPETRGQVLQ) are cytoplasmic.

Belongs to the major facilitator superfamily. As to quaternary structure, interacts with SYT1/synaptotagmin-1 in a calcium-dependent manner. Binds the adapter protein complex AP-2. In terms of assembly, (Microbial infection) Interacts with C.botulinum neurotoxin type A1 and type A2 (BoNT/A, botA). Interaction is improved by glycosylation of SV2. (Microbial infection) Copurifies with C.botulinum neurotoxin type B (BoNT/B, botB) and synaptotagmin 1 (SYT1). Interaction does not require glycosylation of SV2 or SYT1 proteins. Another group finds only copurification with SYT1 and SYT2. As to quaternary structure, (Microbial infection) Interacts with C.botulinum neurotoxin type E (BoNT/E). Interaction requires glycosylation of SV2 proteins. In terms of assembly, (Microbial infection) Copurifies with C.botulinum neurotoxin type F (BoNT/F) and synaptotagmin 1 (SYT2). Another group finds only copurification with BoNT/F. Interaction requires SV2 glycosylation. In terms of processing, phosphorylation by CK1 of the N-terminal cytoplasmic domain regulates interaction with SYT1. Post-translationally, N-glycosylated, on at least 3 residues. As to expression, widely expressed throughout the brain (at protein level). Expressed by neural and endocrine cells of brain and spinal cord.

Its subcellular location is the presynapse. The protein resides in the cytoplasmic vesicle. The protein localises to the secretory vesicle. It is found in the synaptic vesicle membrane. Functionally, plays a role in the control of regulated secretion in neural and endocrine cells, enhancing selectively low-frequency neurotransmission. Positively regulates vesicle fusion by maintaining the readily releasable pool of secretory vesicles. Its function is as follows. (Microbial infection) Receptor for C.botulinum neurotoxin type A (BoNT/A, botA); the toxin binds via extracellular loop 4. Restores uptake of BoNT/A in mouse cells that are deleted for SV2 receptor. Glycosylation of Asn-573 is not essential for receptor activity, but enhances uptake. Also serves as a receptor for the closely related C.botulinum neurotoxin type A2; glycosylation is not essential but enhances the interaction. In terms of biological role, possible receptor for C.botulinum neurotoxin type D (BoNT/D, botD); BoNT/D does not bind to extracellular loop 4 as do BoNT/A and BoNT/E, nor to loop 1 or loop 3. Another group does not find a convincing interaction with SV2. (Microbial infection) Receptor for C.botulinum neurotoxin type E (BoNT/E); the toxin probably binds via extracellular loop 4 and requires glycosylation of Asn-573. Restores uptake of BoNT/E in mouse cells that are deleted for SV2 receptor. Functionally, (Microbial infection) Receptor for C.botulinum neurotoxin type F (BoNT/F). Binding requires glycosylation of Asn-573. In Rattus norvegicus (Rat), this protein is Synaptic vesicle glycoprotein 2A (Sv2a).